We begin with the raw amino-acid sequence, 211 residues long: Porin MspA (211 aa).

The N-terminal stretch at 1-27 is a signal peptide; it reads MKAISRVLIAMVAAIAALFTSTGTSHA.

It belongs to the mycobacterial porin (TC 1.B.24) family. In terms of assembly, forms very stable octamers. Isolated as a 100 kDa complex that can be reduced to monomers upon boiling in 80% dimethyl sulfoxide for 15 minutes. Structures show a goblet with the wide end on the exterior of the outer membrane and a central channel. It is not known if mixed oligomers of MspA with other Msp subunits form in vivo.

The protein resides in the cell outer membrane. The protein localises to the secreted. Its subcellular location is the cell wall. In terms of biological role, the major porin in this organism, forms a water-filled channel which favors the permeation of cations, amino acids, iron Fe(3+) and less efficiently phosphate. Does not transport Fe-ExoMS, the predominant siderophore. Plays a role in transport of beta-lactamase and hydrophilic fluoroquinolone antibiotics such as norfloxacin as well as chloramphenicol. There are about 2400 porins in wild-type, 800 in an mspA deletion and 150 in a double mspA-mspC deletion. Different conductance values with maxima at 2.3 and 4.6 nanosiemens might be caused by a simultaneous reconstitution of MspA channels into the membrane or by the existence of different MspA conformations. This is Porin MspA (mspA) from Mycolicibacterium smegmatis (strain ATCC 700084 / mc(2)155) (Mycobacterium smegmatis).